A 352-amino-acid polypeptide reads, in one-letter code: Threonine synthase (352 aa).

K59 carries the N6-(pyridoxal phosphate)lysine modification. Pyridoxal 5'-phosphate-binding positions include N85, 185 to 189, and T314; that span reads GNAGN.

This sequence belongs to the threonine synthase family. The cofactor is pyridoxal 5'-phosphate.

It carries out the reaction O-phospho-L-homoserine + H2O = L-threonine + phosphate. It participates in amino-acid biosynthesis; L-threonine biosynthesis; L-threonine from L-aspartate: step 5/5. Functionally, catalyzes the gamma-elimination of phosphate from L-phosphohomoserine and the beta-addition of water to produce L-threonine. This Bacillus sp. (strain ULM1) protein is Threonine synthase (thrC).